A 319-amino-acid polypeptide reads, in one-letter code: Glycine--tRNA ligase alpha subunit (319 aa).

The protein belongs to the class-II aminoacyl-tRNA synthetase family. Tetramer of two alpha and two beta subunits.

It is found in the cytoplasm. The enzyme catalyses tRNA(Gly) + glycine + ATP = glycyl-tRNA(Gly) + AMP + diphosphate. The chain is Glycine--tRNA ligase alpha subunit from Oenococcus oeni (strain ATCC BAA-331 / PSU-1).